The sequence spans 288 residues: ATP synthase gamma chain (288 aa).

This sequence belongs to the ATPase gamma chain family. As to quaternary structure, F-type ATPases have 2 components, CF(1) - the catalytic core - and CF(0) - the membrane proton channel. CF(1) has five subunits: alpha(3), beta(3), gamma(1), delta(1), epsilon(1). CF(0) has three main subunits: a, b and c.

Its subcellular location is the cell inner membrane. Functionally, produces ATP from ADP in the presence of a proton gradient across the membrane. The gamma chain is believed to be important in regulating ATPase activity and the flow of protons through the CF(0) complex. The protein is ATP synthase gamma chain of Polaromonas naphthalenivorans (strain CJ2).